Consider the following 471-residue polypeptide: N-succinylglutamate 5-semialdehyde dehydrogenase (471 aa).

Gly207–Gly212 provides a ligand contact to NAD(+). Residues Glu230 and Cys264 contribute to the active site.

The protein belongs to the aldehyde dehydrogenase family. AstD subfamily.

The enzyme catalyses N-succinyl-L-glutamate 5-semialdehyde + NAD(+) + H2O = N-succinyl-L-glutamate + NADH + 2 H(+). Its pathway is amino-acid degradation; L-arginine degradation via AST pathway; L-glutamate and succinate from L-arginine: step 4/5. Its function is as follows. Catalyzes the NAD-dependent reduction of succinylglutamate semialdehyde into succinylglutamate. The protein is N-succinylglutamate 5-semialdehyde dehydrogenase of Novosphingobium aromaticivorans (strain ATCC 700278 / DSM 12444 / CCUG 56034 / CIP 105152 / NBRC 16084 / F199).